The chain runs to 301 residues: tRNA dimethylallyltransferase (301 aa).

12-19 lines the ATP pocket; the sequence is GPTASGKT. 14–19 is a binding site for substrate; the sequence is TASGKT. Residues 37–40 are interaction with substrate tRNA; that stretch reads DSLS.

This sequence belongs to the IPP transferase family. Monomer. It depends on Mg(2+) as a cofactor.

The enzyme catalyses adenosine(37) in tRNA + dimethylallyl diphosphate = N(6)-dimethylallyladenosine(37) in tRNA + diphosphate. Catalyzes the transfer of a dimethylallyl group onto the adenine at position 37 in tRNAs that read codons beginning with uridine, leading to the formation of N6-(dimethylallyl)adenosine (i(6)A). This is tRNA dimethylallyltransferase from Sulfurovum sp. (strain NBC37-1).